The primary structure comprises 292 residues: MAEAQNDPLLPGYSFNAHLVAGLTPIEANGYLDFFIDRPLGMKGYILNLTIRGQGVVKNQGREFVCRPGDILLFPPGEIHHYGRHPEAREWYHQWVYFRPRAYWHEWLNWPSIFANTGFFRPDEAHQPHFSDLFGQIINAGQGEGRYSELLAINLLEQLLLRRMEAINESLHPPMDNRVREACQYISDHLADSNFDIASVAQHVCLSPSRLSHLFRQQLGISVLSWREDQRISQAKLLLSTTRMPIATVGRNVGFDDQLYFSRVFKKCTGASPSEFRAGCEEKVNDVAVKLS.

Residues P8, T24, R38, Y82, and H93 each coordinate alpha-L-arabinopyanose. One can recognise an HTH araC/xylS-type domain in the interval 180 to 279 (REACQYISDH…GASPSEFRAG (100 aa)). DNA-binding regions (H-T-H motif) lie at residues 198-219 (ASVA…RQQL) and 246-269 (IATV…KKCT).

In terms of assembly, homodimer.

The protein resides in the cytoplasm. With respect to regulation, arabinose converts the repressor form of AraC to the activator form to regulate the araBAD promoter. In the absence of arabinose, AraC binds to the araO2 and araI1 half-sites in the promoter region of the araBAD operon, leading to the formation of a DNA loop that blocks access of RNA polymerase to the promoter. In the presence of arabinose and the cyclic AMP receptor protein (CRP), it binds to the adjacent half-sites araI1 and araI2, leading to the binding of RNA polymerase to the promoter region and transcription of the araBAD operon. AraI1 acts as a switch mechanism allowing both the repressor and the activator forms of AraC protein to regulate the araBAD promoter. Inhibited by D-fucose, which binds competitively to the same site on the protein. Its function is as follows. Transcription factor that regulates the expression of several genes involved in the transport and metabolism of L-arabinose. Functions both as a positive and a negative regulator. In the presence of arabinose, activates the expression of the araBAD, araE, araFGH and araJ promoters. In the absence of arabinose, negatively regulates the araBAD operon. Represses its own transcription. Acts by binding directly to DNA. In Escherichia coli (strain K12), this protein is Arabinose operon regulatory protein.